A 55-amino-acid polypeptide reads, in one-letter code: Conotoxin Cal22b (55 aa).

Positions Gly1–Ala5 are excised as a propeptide.

Post-translationally, contains 4 disulfide bonds. Expressed by the venom duct.

The protein resides in the secreted. Its function is as follows. Probable neurotoxin with unknown target. Possibly targets ion channels. The chain is Conotoxin Cal22b from Californiconus californicus (California cone).